A 295-amino-acid polypeptide reads, in one-letter code: Sulfotransferase 1A1 (295 aa).

48-53 (KSGTTW) serves as a coordination point for 3'-phosphoadenylyl sulfate. 106-108 (KTH) provides a ligand contact to substrate. The active-site Proton acceptor is the H108. 3'-phosphoadenylyl sulfate is bound by residues R130, S138, Y193, 227-232 (TSFKEM), and 255-259 (FMRKG). S138 is modified (phosphoserine).

Belongs to the sulfotransferase 1 family. In terms of assembly, homodimer. Ubiquitously expressed in canine tissues with highest expression in male and female liver.

The protein localises to the cytoplasm. It catalyses the reaction a phenol + 3'-phosphoadenylyl sulfate = an aryl sulfate + adenosine 3',5'-bisphosphate + H(+). It carries out the reaction 17beta-estradiol + 3'-phosphoadenylyl sulfate = 17beta-estradiol 3-sulfate + adenosine 3',5'-bisphosphate + H(+). The enzyme catalyses 4-ethylphenol + 3'-phosphoadenylyl sulfate = 4-ethylphenyl sulfate + adenosine 3',5'-bisphosphate + H(+). The catalysed reaction is 4-nitrophenol + 3'-phosphoadenylyl sulfate = 4-nitrophenyl sulfate + adenosine 3',5'-bisphosphate. It catalyses the reaction dopamine + 3'-phosphoadenylyl sulfate = dopamine 3-O-sulfate + adenosine 3',5'-bisphosphate + H(+). It carries out the reaction dopamine + 3'-phosphoadenylyl sulfate = dopamine 4-O-sulfate + adenosine 3',5'-bisphosphate + H(+). The enzyme catalyses 3,3',5-triiodo-L-thyronine + 3'-phosphoadenylyl sulfate = 3,3',5-triiodo-L-thyronine sulfate + adenosine 3',5'-bisphosphate + H(+). The catalysed reaction is 3,3',5'-triiodo-L-thyronine + 3'-phosphoadenylyl sulfate = 3,3',5'-triiodo-L-thyronine sulfate + adenosine 3',5'-bisphosphate + H(+). It catalyses the reaction 3,3'-diiodo-L-thyronine + 3'-phosphoadenylyl sulfate = 3,3'-diiodo-L-thyronine sulfate + adenosine 3',5'-bisphosphate + H(+). It carries out the reaction L-thyroxine + 3'-phosphoadenylyl sulfate = L-thyroxine sulfate + adenosine 3',5'-bisphosphate + H(+). Its function is as follows. Sulfotransferase that utilizes 3'-phospho-5'-adenylyl sulfate (PAPS) as sulfonate donor to catalyze the sulfate conjugation of a wide variety of acceptor molecules bearing a hydroxyl or an amine group. Sulfonation increases the water solubility of most compounds, and therefore their renal excretion, but it can also result in bioactivation to form active metabolites. Displays broad substrate specificity for small phenolic compounds. Plays an important role in the sulfonation of endogenous molecules such as steroid hormones. Mediates also the metabolic activation of carcinogenic N-hydroxyarylamines leading to highly reactive intermediates capable of forming DNA adducts, potentially resulting in mutagenesis. May play a role in gut microbiota-host metabolic interaction. O-sulfonates 4-ethylphenol (4-EP), a dietary tyrosine-derived metabolite produced by gut bacteria. The product 4-EPS crosses the blood-brain barrier and may negatively regulate oligodendrocyte maturation and myelination, affecting the functional connectivity of different brain regions associated with the limbic system. Catalyzes the sulfate conjugation of dopamine. Catalyzes the sulfation of T4 (L-thyroxine/3,5,3',5'-tetraiodothyronine), T3 (3,5,3'-triiodothyronine), rT3 (3,3',5'-triiodothyronine) and 3,3'-T2 (3,3'-diiodothyronine), with a substrate preference of 3,3'-T2 &gt; rT3 &gt; T3 &gt; T4. This Canis lupus familiaris (Dog) protein is Sulfotransferase 1A1 (SULT1A1).